A 335-amino-acid polypeptide reads, in one-letter code: Ferrochelatase (335 aa).

Fe cation-binding residues include H194 and E275.

The protein belongs to the ferrochelatase family.

The protein localises to the cytoplasm. The enzyme catalyses heme b + 2 H(+) = protoporphyrin IX + Fe(2+). It participates in porphyrin-containing compound metabolism; protoheme biosynthesis; protoheme from protoporphyrin-IX: step 1/1. Its function is as follows. Catalyzes the ferrous insertion into protoporphyrin IX. The chain is Ferrochelatase from Sodalis glossinidius (strain morsitans).